The sequence spans 242 residues: Floral homeotic protein AGAMOUS (242 aa).

Residues 19 to 73 form the MADS-box domain; sequence RGKIEIKRIENTTNRQVTFCKRRNGLLKKAYELSVLCDAEVALIVFSTRGRLYEY. The 91-residue stretch at 103-193 folds into the K-box domain; the sequence is AQFYQQEASK…RAKIAENERA (91 aa).

In terms of tissue distribution, flower. Preferentially expressed in stamen and carpel and weakly in petal. Undetected in leaves and roots.

It localises to the nucleus. Probable transcription factor involved in regulating genes that determines stamen and carpel development in wild-type flowers. The sequence is that of Floral homeotic protein AGAMOUS (AG2) from Panax ginseng (Korean ginseng).